Consider the following 711-residue polypeptide: GDNF-inducible zinc finger protein 1 (711 aa).

One can recognise a BTB domain in the interval 31-103; the sequence is CDVTVSVEYQ…VYTAKVQVEE (73 aa). A compositionally biased stretch (low complexity) spans 153–168; sequence SGSQVSAAPAPRASVA. Disordered stretches follow at residues 153 to 220 and 243 to 312; these read SGSQ…PKIR and RLRE…EGEK. 3 stretches are compositionally biased toward basic and acidic residues: residues 197–212, 243–252, and 265–277; these read PPKK…KEVV, RLREQQKTAE, and SPDR…EQVS. Over residues 298–309 the composition is skewed to acidic residues; the sequence is EEEEEEEEEDEE. C2H2-type zinc fingers lie at residues 317 to 340, 348 to 371, 377 to 400, 407 to 429, 435 to 457, 463 to 485, 491 to 513, 519 to 541, 547 to 569, and 575 to 597; these read FKCS…KHRH, YRCD…RHVH, FPCE…LQVH, HRCG…ERTH, YGCT…MRIH, FVCD…KRCH, FMCE…NRIH, FKCE…IKVH, YCCD…RRIH, and FMCN…TSIH. Ser-613 is modified (phosphoserine).

It belongs to the krueppel C2H2-type zinc-finger protein family. In terms of assembly, interacts with NCL. Expressed in adult brain, heart, skeletal muscle, kidney and liver. Also detected in fetal brain and kidney, and at lower levels in fetal lung and liver.

Its subcellular location is the cytoplasm. The protein resides in the nucleus. It localises to the nucleoplasm. The protein localises to the nucleolus. Its function is as follows. Transcriptional repressor that binds the GZF1 responsive element (GRE) (consensus: 5'-TGCGCN[TG][CA]TATA-3'). May be regulating VSX2/HOX10 expression. This chain is GDNF-inducible zinc finger protein 1, found in Homo sapiens (Human).